A 640-amino-acid chain; its full sequence is Dextranase (640 aa).

A signal peptide spans 1–32 (MPGTGLGRLAKRMTAAAAVFFISTSAVLPAQA). Positions 33-49 (ATAPAAAPPGVPAALKA) are excised as a propeptide. Residues 248-269 (EQKERLVPTEESGSIHYPEPGE) are disordered.

Belongs to the glycosyl hydrolase 49 family.

The protein localises to the secreted. It carries out the reaction Endohydrolysis of (1-&gt;6)-alpha-D-glucosidic linkages in dextran.. Functionally, efficiently decomposes water-insoluble glucan as well as dextran. The chain is Dextranase from Arthrobacter sp. (strain CB-8).